We begin with the raw amino-acid sequence, 199 residues long: Nuclear protein UL4 (199 aa).

The protein belongs to the alphaherpesvirinae HHV-1 UL4 family.

The protein resides in the host nucleus. In Homo sapiens (Human), this protein is Nuclear protein UL4.